The sequence spans 55 residues: Large ribosomal subunit protein bL33 (55 aa).

Belongs to the bacterial ribosomal protein bL33 family.

The chain is Large ribosomal subunit protein bL33 from Deinococcus geothermalis (strain DSM 11300 / CIP 105573 / AG-3a).